A 444-amino-acid polypeptide reads, in one-letter code: Radical S-adenosyl methionine domain-containing protein 1, mitochondrial (444 aa).

A mitochondrion-targeting transit peptide spans methionine 1–serine 39. In terms of domain architecture, Radical SAM core spans histidine 40 to histidine 274. Tyrosine 47 is an S-adenosyl-L-methionine binding site. Cysteine 53, cysteine 57, and cysteine 60 together coordinate [4Fe-4S] cluster. S-adenosyl-L-methionine is bound by residues glycine 102, glycine 103 to threonine 104, glutamate 135, glutamine 162, arginine 174, and aspartate 199.

This sequence belongs to the anaerobic coproporphyrinogen-III oxidase family. HemW subfamily. Requires [4Fe-4S] cluster as cofactor.

It is found in the mitochondrion. Its function is as follows. May be a heme chaperone, appears to bind heme. Homologous bacterial proteins do not have oxygen-independent coproporphyrinogen-III oxidase activity. Binds 1 [4Fe-4S] cluster. The cluster is coordinated with 3 cysteines and an exchangeable S-adenosyl-L-methionine. This chain is Radical S-adenosyl methionine domain-containing protein 1, mitochondrial (rsad1), found in Danio rerio (Zebrafish).